Reading from the N-terminus, the 250-residue chain is Probable transcriptional regulatory protein Cpha266_0538 (250 aa).

It belongs to the TACO1 family.

It localises to the cytoplasm. The polypeptide is Probable transcriptional regulatory protein Cpha266_0538 (Chlorobium phaeobacteroides (strain DSM 266 / SMG 266 / 2430)).